The sequence spans 156 residues: Small ribosomal subunit protein uS7c (156 aa).

It belongs to the universal ribosomal protein uS7 family. In terms of assembly, part of the 30S ribosomal subunit.

Its subcellular location is the plastid. It localises to the chloroplast. Functionally, one of the primary rRNA binding proteins, it binds directly to 16S rRNA where it nucleates assembly of the head domain of the 30S subunit. The sequence is that of Small ribosomal subunit protein uS7c (rps7) from Phaeodactylum tricornutum (strain CCAP 1055/1).